The primary structure comprises 330 residues: Ferredoxin--NADP reductase (330 aa).

Residues Glu-35, Gln-43, Tyr-48, Val-90, Phe-123, Asp-285, and Thr-326 each coordinate FAD.

The protein belongs to the ferredoxin--NADP reductase type 2 family. Homodimer. FAD is required as a cofactor.

The catalysed reaction is 2 reduced [2Fe-2S]-[ferredoxin] + NADP(+) + H(+) = 2 oxidized [2Fe-2S]-[ferredoxin] + NADPH. The chain is Ferredoxin--NADP reductase from Streptococcus pyogenes serotype M1.